A 197-amino-acid polypeptide reads, in one-letter code: Phosphoheptose isomerase (197 aa).

The 163-residue stretch at 34–196 (MVQCLLGGNK…DRTLFPQDDQ (163 aa)) folds into the SIS domain. 49-51 (NGG) is a substrate binding site. The Zn(2+) site is built by His58 and Glu62. Residues Glu62, 91-92 (ND), 117-119 (STS), Ser122, and Gln172 contribute to the substrate site. Zn(2+) contacts are provided by Gln172 and His180.

Belongs to the SIS family. GmhA subfamily. Homotetramer. Zn(2+) is required as a cofactor.

The protein resides in the cytoplasm. It catalyses the reaction 2 D-sedoheptulose 7-phosphate = D-glycero-alpha-D-manno-heptose 7-phosphate + D-glycero-beta-D-manno-heptose 7-phosphate. The protein operates within carbohydrate biosynthesis; D-glycero-D-manno-heptose 7-phosphate biosynthesis; D-glycero-alpha-D-manno-heptose 7-phosphate and D-glycero-beta-D-manno-heptose 7-phosphate from sedoheptulose 7-phosphate: step 1/1. Its function is as follows. Catalyzes the isomerization of sedoheptulose 7-phosphate in D-glycero-D-manno-heptose 7-phosphate. The chain is Phosphoheptose isomerase from Shewanella loihica (strain ATCC BAA-1088 / PV-4).